The chain runs to 292 residues: Fat storage-inducing transmembrane protein 1 (292 aa).

The Lumenal segment spans residues 1–18 (MERGPTVGAGLGAGTRVR). The helical transmembrane segment at 19-39 (ALLGCLVKVLLWVASALLYFG) threads the bilayer. The Cytoplasmic portion of the chain corresponds to 40 to 54 (SEQAARLLGSPCLRR). Residues 55–75 (LYHAWLAAVVIFGPLLQFHVN) form a helical membrane-spanning segment. The Lumenal portion of the chain corresponds to 76–94 (SRTIFASHGNFFNIKFVNS). A helical membrane pass occupies residues 95–115 (AWGWTCTFLGGFVLLVVFLAT). The Cytoplasmic portion of the chain corresponds to 116–141 (RRVAVTARHLSRLVVGAAVWRGAGRA). Residues 142 to 162 (FLLIEDLTGSCFEPLPQGLLL) form a helical membrane-spanning segment. Over 163–187 (HELPDRKSCLAAGHQWRGYTVSSHT) the chain is Lumenal. Residue His-186 is part of the active site. The chain crosses the membrane as a helical span at residues 188-208 (FLLTFCCLLMAEEAAVFAKYL). At 209–220 (AHGLPAGAPLRL) the chain is on the cytoplasmic side. A helical transmembrane segment spans residues 221-241 (VFLLNVLLLGLWNFLLLCTVI). The Lumenal segment spans residues 242 to 249 (YFHQYTHK). Residue His-244 is part of the active site. A helical membrane pass occupies residues 250 to 270 (VVGAAVGTFAWYLTYGSWYHQ). Over 271-292 (PWSPGIPGHGLFPRSRSMRKHN) the chain is Cytoplasmic.

It belongs to the FIT family. FIT1 subfamily. In terms of tissue distribution, predominantly expressed in skeletal muscle and at lower levels in the heart (at protein level). In the heart, mRNA expression levels do not correlate well with protein levels, suggesting post-transcriptional regulation in this organ.

The protein localises to the endoplasmic reticulum membrane. Functionally, plays an important role in the formation of lipid droplets (LDs) which are storage organelles at the center of lipid and energy homeostasis. Directly binds to diacylglycerol (DAGs) and triacylglycerol. The protein is Fat storage-inducing transmembrane protein 1 of Mus musculus (Mouse).